The following is a 400-amino-acid chain: Methylthioribose kinase (400 aa).

ATP contacts are provided by residues asparagine 44, lysine 61, and 115 to 117; that span reads EDL. Substrate is bound at residue aspartate 233. An ATP-binding site is contributed by 250 to 252; the sequence is DPE. Arginine 340 contributes to the substrate binding site.

The protein belongs to the methylthioribose kinase family. Homodimer.

It catalyses the reaction 5-(methylsulfanyl)-D-ribose + ATP = 5-(methylsulfanyl)-alpha-D-ribose 1-phosphate + ADP + H(+). It participates in amino-acid biosynthesis; L-methionine biosynthesis via salvage pathway; S-methyl-5-thio-alpha-D-ribose 1-phosphate from S-methyl-5'-thioadenosine (hydrolase route): step 2/2. Functionally, catalyzes the phosphorylation of methylthioribose into methylthioribose-1-phosphate. The chain is Methylthioribose kinase from Geobacillus sp. (strain WCH70).